The primary structure comprises 339 residues: 4-hydroxy-2-oxovalerate aldolase 3 (339 aa).

A Pyruvate carboxyltransferase domain is found at 7–259 (IRVTDTSLRD…KTGIDFFAIA (253 aa)). 15 to 16 (RD) serves as a coordination point for substrate. Aspartate 16 contributes to the Mn(2+) binding site. The active-site Proton acceptor is the histidine 19. Serine 169 and histidine 198 together coordinate substrate. 2 residues coordinate Mn(2+): histidine 198 and histidine 200. Tyrosine 289 is a binding site for substrate.

It belongs to the 4-hydroxy-2-oxovalerate aldolase family.

The catalysed reaction is (S)-4-hydroxy-2-oxopentanoate = acetaldehyde + pyruvate. This Rhodococcus jostii (strain RHA1) protein is 4-hydroxy-2-oxovalerate aldolase 3 (hsaF).